Here is a 411-residue protein sequence, read N- to C-terminus: Heparan-sulfate 6-O-sulfotransferase 1 (411 aa).

The Cytoplasmic segment spans residues 1 to 19 (MRRRRAGGRTMVERASKFV). The helical; Signal-anchor for type II membrane protein transmembrane segment at 20–37 (LVVAGSACFMLILYQYAG) threads the bilayer. Residues 38–411 (PGLSLGAPGG…DYMSHIIEKW (374 aa)) are Lumenal-facing. 93 to 101 (HIQKTGGTT) contacts 3'-phosphoadenylyl sulfate. Substrate-binding positions include 123–124 (KK), Arg-140, Trp-145, and His-150. His-150 serves as the catalytic Proton acceptor. 3'-phosphoadenylyl sulfate-binding residues include Arg-185 and Ser-193. 2 residues coordinate substrate: His-197 and Trp-204. A glycan (N-linked (GlcNAc...) asparagine) is linked at Asn-264. A 3'-phosphoadenylyl sulfate-binding site is contributed by 317–319 (MQY). Residue Asn-320 is glycosylated (N-linked (GlcNAc...) asparagine). 323–324 (RA) lines the 3'-phosphoadenylyl sulfate pocket. Residues 352–386 (KDLFQQRYQYKRQLERREQRLRNREERLLHRSKEA) are a coiled coil. The disordered stretch occupies residues 380-401 (LHRSKEALPREDPEEPGRVPTE).

The protein belongs to the sulfotransferase 6 family. In terms of processing, N-glycosylated. Expressed in fetal brain and liver.

It is found in the membrane. The catalysed reaction is alpha-D-glucosaminyl-[heparan sulfate](n) + 3'-phosphoadenylyl sulfate = 6-sulfo-alpha-D-glucosaminyl-[heparan sulfate](n) + adenosine 3',5'-bisphosphate + H(+). 6-O-sulfation enzyme which catalyzes the transfer of sulfate from 3'-phosphoadenosine 5'-phosphosulfate (PAPS) to position 6 of the N-sulfoglucosamine residue (GlcNS) of heparan sulfate. Critical for normal neuronal development where it may play a role in neuron branching. May also play a role in limb development. May prefer iduronic acid. The chain is Heparan-sulfate 6-O-sulfotransferase 1 from Mus musculus (Mouse).